A 67-amino-acid polypeptide reads, in one-letter code: Non-specific lipid-transfer protein 2P (67 aa).

4 cysteine pairs are disulfide-bonded: cysteine 2/cysteine 34, cysteine 10/cysteine 24, cysteine 25/cysteine 60, and cysteine 36/cysteine 67.

Its function is as follows. Transfer lipids across membranes. May play a role in plant defense or in the biosynthesis of cuticle layers. This Triticum aestivum (Wheat) protein is Non-specific lipid-transfer protein 2P.